A 2332-amino-acid polypeptide reads, in one-letter code: Genome polyprotein (2332 aa).

Residues 1–201 form the Peptidase C28 domain; the sequence is MNTTNCFIAL…WKTQVQKKLK (201 aa). Topologically, residues 1 to 1480 are cytoplasmic; that stretch reads MNTTNCFIAL…SFVKRAFKRL (1480 aa). Catalysis depends on for leader protease activity residues Cys51, His148, and Asp163. Disordered stretches follow at residues 199–218 and 237–264; these read KLKGAGQSSPATGSQNQSGN and TQLGDNTISGGSNEGSTDTTSTHTTNTQ. Gly202 carries the N-myristoyl glycine; by host lipid modification. Polar residues-rich tracts occupy residues 204 to 218 and 237 to 251; these read GQSSPATGSQNQSGN and TQLGDNTISGGSNEG. Over residues 252 to 264 the composition is skewed to low complexity; that stretch reads STDTTSTHTTNTQ. The tract at residues 789 to 797 is antigenic epitope; it reads ALLRAATYY. The Cell attachment site motif lies at 867–870; sequence RSGD. Residues 1189–1353 form the SF3 helicase domain; the sequence is NVHIANLCKV…DGYKINNKLD (165 aa). ATP is bound at residue 1217-1224; it reads GKSGQGKS. Residues 1481–1501 lie within the membrane without spanning it; sequence KENFEIVALCLTLLANIVIMI. At 1502 to 2332 the chain is on the cytoplasmic side; it reads RETRKRQKMV…RWVNAVCGDA (831 aa). 2 stretches are compositionally biased toward basic and acidic residues: residues 1529–1538 and 1549–1563; these read KTLDEAEKNP and FRERSLTGQKVRDDV. The interval 1529-1588 is disordered; it reads KTLDEAEKNPLETSGASTVGFRERSLTGQKVRDDVSSEPAQPAEDQPQAEGPYSGPLERQ. An O-(5'-phospho-RNA)-tyrosine mark is found at Tyr1581, Tyr1604, and Tyr1628. A Peptidase C3 domain is found at 1652-1848; it reads APPTDLQKMV…YCSCVSRSML (197 aa). Residue His1695 is the For protease 3C activity; Proton donor/acceptor of the active site. Residues Asp1733 and Cys1812 each act as for protease 3C activity in the active site. The short motif at 1878 to 1886 is the Nuclear localization signal element; it reads MRKTKLAPT. Residues 2096–2214 form the RdRp catalytic domain; it reads RNVWDVDYSA…ASDYDLDFEA (119 aa). The For RdRp activity role is filled by Asp2200.

It belongs to the picornaviruses polyprotein family. Interacts with host ISG15. As to quaternary structure, interacts (via R-G-D motif) with host ITGAV/ITGB6. Interacts with host MAVS; this interaction inhibits binding of host TRAF3 to MAVS, thereby suppressing interferon-mediated responses. In terms of assembly, forms homooligomers. Homohexamer. Interacts with host VIM. Interacts with host BECN1. As to quaternary structure, interacts with host DCTN3. In terms of assembly, interacts with RNA-dependent RNA polymerase; this interaction allows 3B-1 to binds 2 polymerases and act as a primer. It also allows the recruitment of the RNA-dependent RNA polymerase to host membranes. Interacts with RNA-dependent RNA polymerase; this interaction allows 3B-2 to act as a primer. As to quaternary structure, interacts with RNA-dependent RNA polymerase; this interaction allows 3B-3 to act as a primer. In terms of assembly, interacts with 3B-1; this interaction allows 3B-1 to binds 2 polymerases and act as a primer. It also allows the recruitment of the RNA-dependent RNA polymerase to host membranes. Interacts with 3B-2; this interaction allows 3B-2 to act as a primer. Interacts with 3B-3; this interaction allows 3B-3 to act as a primer. In terms of processing, removes six residues from its own C-terminus, generating sLb(pro). Post-translationally, specific enzymatic cleavages in vivo by the viral proteases yield a variety of precursors and mature proteins. The polyprotein seems to be cotranslationally cleaved at the 2A/2B junction by a ribosomal skip from one codon to the next without formation of a peptide bond. This process would release the L-P1-2A peptide from the translational complex. During virion maturation, immature virions are rendered infectious following cleavage of VP0 into VP4 and VP2. This maturation seems to be an autocatalytic event triggered by the presence of RNA in the capsid and is followed by a conformational change of the particle. In terms of processing, myristoylation is required during RNA encapsidation and formation of the mature virus particle. Post-translationally, uridylylated by the polymerase and covalently linked to the 5'-end of genomic RNA. These uridylylated forms act as a nucleotide-peptide primer for the polymerase.

Its subcellular location is the host nucleus. The protein resides in the host cytoplasm. It localises to the virion. It is found in the host endoplasmic reticulum membrane. The protein localises to the host cytoplasmic vesicle membrane. It carries out the reaction Autocatalytically cleaves itself from the polyprotein of the foot-and-mouth disease virus by hydrolysis of a Lys-|-Gly bond, but then cleaves host cell initiation factor eIF-4G at bonds -Gly-|-Arg- and -Lys-|-Arg-.. It catalyses the reaction a ribonucleoside 5'-triphosphate + H2O = a ribonucleoside 5'-diphosphate + phosphate + H(+). The catalysed reaction is RNA(n) + a ribonucleoside 5'-triphosphate = RNA(n+1) + diphosphate. The enzyme catalyses Selective cleavage of Gln-|-Gly bond in the poliovirus polyprotein. In other picornavirus reactions Glu may be substituted for Gln, and Ser or Thr for Gly.. Functionally, autocatalytically cleaves itself from the polyprotein at the L/VP0 junction. Also cleaves the host translation initiation factors EIF4G1 and EIF4G3, in order to shut off the capped cellular mRNA transcription. Plays a role in counteracting host innate antiviral response using diverse mechanisms. Possesses a deubiquitinase activity acting on both 'Lys-48' and 'Lys-63'-linked polyubiquitin chains. In turn, inhibits the ubiquitination and subsequent activation of key signaling molecules of type I IFN response such as host RIGI, TBK1, TRAF3 and TRAF6. Inhibits host NF-kappa-B activity by inducing a decrease in RELA mRNA levels. Cleaves a peptide bond in the C-terminus of host ISG15, resulting in the damaging of this modifier that can no longer be attached to target proteins. Also cleaves host G3BP1 and G3BP2 in order to inhibit cytoplasmic stress granules assembly. Lies on the inner surface of the capsid shell. After binding to the host receptor, the capsid undergoes conformational changes. Capsid protein VP4 is released, capsid protein VP1 N-terminus is externalized, and together, they shape a pore in the host membrane through which the viral genome is translocated into the host cell cytoplasm. After genome has been released, the channel shrinks. In terms of biological role, forms an icosahedral capsid of pseudo T=3 symmetry with capsid proteins VP1 and VP3. The capsid is composed of 60 copies of each capsid protein organized in the form of twelve pentamers and encloses the viral positive strand RNA genome. Upon acidifcation in the endosome, dissociates into pentamers. Its function is as follows. Forms an icosahedral capsid of pseudo T=3 symmetry with capsid proteins VP2 and VP3. The capsid is composed of 60 copies of each capsid protein organized in the form of twelve pentamers and encloses the viral positive strand RNA genome. Mediates cell entry by attachment to an integrin receptor, usually host ITGAV/ITGB6. In addition, targets host MAVS to suppress type I IFN pathway. Upon acidifcation in the endosome, dissociates into pentamers. Functionally, forms an icosahedral capsid of pseudo T=3 symmetry with capsid proteins VP0 and VP3. The capsid is composed of 60 copies of each capsid protein organized in the form of twelve pentamers and encloses the viral positive strand RNA genome. Mediates self-processing of the polyprotein by a translational effect termed 'ribosome skipping'. Mechanistically, 2A-mediated cleavage occurs between the C-terminal glycine and the proline of the downstream protein 2B. In the case of foot-and-mouth disease virus, the 2A oligopeptide is post-translationally 'trimmed' from the C-terminus of the upstream protein 1D by 3C proteinase. In terms of biological role, plays an essential role in the virus replication cycle by acting as a viroporin. Creates a pore in the host endoplasmic reticulum and as a consequence releases Ca2+ in the cytoplasm of infected cell. In turn, high levels of cytoplasmic calcium may trigger membrane trafficking and transport of viral ER-associated proteins to viroplasms, sites of viral genome replication. Its function is as follows. Associates with and induces structural rearrangements of intracellular membranes. Triggers host autophagy by interacting with host BECN1 and thereby promotes viral replication. Participates in viral replication and interacts with host DHX9. Displays RNA-binding, nucleotide binding and NTPase activities. May play a role in virion morphogenesis and viral RNA encapsidation by interacting with the capsid protein VP3. Functionally, plays important roles in virus replication, virulence and host range. Cooperates with host DDX56 to inhibit IRF3 nuclear translocation and subsequent type I interferon production. Covalently linked to the 5'-end of both the positive-strand and negative-strand genomic RNAs. Acts as a genome-linked replication primer. In terms of biological role, covalently linked to the 5'-end0 of both the positive-strand and negative-strand genomic RNAs. Acts as a genome-linked replication primer. Its function is as follows. Cysteine protease that generates mature viral proteins from the precursor polyprotein. In addition to its proteolytic activity, binds to viral RNA and thus influences viral genome replication. RNA and substrate bind cooperatively to the protease. Functionally, RNA-directed RNA polymerase 3D-POL replicates genomic and antigenomic RNA by recognizing replications specific signals. Covalently attaches UMP to a tyrosine of VPg, which is used to prime RNA synthesis. The positive stranded RNA genome is first replicated at virus induced membranous vesicles, creating a dsRNA genomic replication form. This dsRNA is then used as template to synthesize positive stranded RNA genomes. ss(+)RNA genomes are either translated, replicated or encapsidated. The protein is Genome polyprotein of Bos taurus (Bovine).